The sequence spans 1978 residues: Protein MOR1 (1978 aa).

2 HEAT repeats span residues 48–86 (DPRL…AADS) and 165–202 (IPPK…WIGK). The segment at 230 to 264 (AGAKPTRKIRSEQDKEPEAEASSDVVGDGPSEEAV) is disordered. The segment covering 238 to 247 (IRSEQDKEPE) has biased composition (basic and acidic residues). HEAT repeat units follow at residues 322 to 359 (GDFS…GLRT), 363 to 400 (ASSR…AGCL), and 442 to 479 (KAHK…SVGM). Residues 501-587 (IAGSGGGDQA…SVEPPEDVEP (87 aa)) are disordered. Residues 510–527 (AGTSSVTVQSSVGSTATG) are compositionally biased toward low complexity. The span at 565 to 577 (GKKDGSVRNEGSK) shows a compositional bias: basic and acidic residues. HEAT repeat units follow at residues 849–886 (DIST…EANK), 890–928 (PTGT…AMGP), 932–969 (KASK…AVHL), and 1008–1045 (VDAI…VSGQ). The disordered stretch occupies residues 1087–1115 (SKGVTKISKSTSNGTLKQGNRSRAVPTKG). Over residues 1093–1107 (ISKSTSNGTLKQGNR) the composition is skewed to polar residues. HEAT repeat units follow at residues 1230–1253 (LKVL…MTEA), 1254–1286 (EAAI…QIIQ), 1287–1325 (AYSV…TCGT), and 1328–1365 (GGLL…ILGA). The span at 1393-1403 (MEKRREGKPGE) shows a compositional bias: basic and acidic residues. Residues 1393–1431 (MEKRREGKPGEARAALRRSVRDSGPEVAEQSGDISQTVP) form a disordered region. The stretch at 1535 to 1575 (RSCKYVLNTLMQTFQNKKLAHAVKEGTLESLITELLLWLLD) is one HEAT 14 repeat. The tract at residues 1837 to 1862 (AAAGRTPSSLPLSTPPPSSLALPSPD) is disordered.

Belongs to the TOG/XMAP215 family. Expressed in roots, cotyledons, rosette leaves, stems, open flowers and green siliques.

The protein localises to the cytoplasm. It is found in the cytoskeleton. Its subcellular location is the phragmoplast. The protein resides in the spindle. In terms of biological role, microtubule-binding protein that is essential for cortical microtubules organization and function. Essential for maintaining the interphase cortical array and for correct morphogenesis. Promotes rapid growth and shrinkage of microtubules and suppresses the pausing of interphase microtubules. Regulates the structure and function of microtubule arrays during mitosis and cytokinesis. Probably not required for cellulose microfibrils alignment in roots. This chain is Protein MOR1 (MOR1), found in Arabidopsis thaliana (Mouse-ear cress).